Reading from the N-terminus, the 314-residue chain is (+)-neomenthol dehydrogenase (314 aa).

13 to 36 serves as a coordination point for NADP(+); sequence VTGGNKGIGYETCRQLASKGVVVV. Residue Ser-183 coordinates substrate. Tyr-239 serves as the catalytic Proton acceptor.

The protein belongs to the short-chain dehydrogenases/reductases (SDR) family. As to quaternary structure, monomer. In terms of tissue distribution, expressed in flowers and red fruit tissues. Not detected in leaves, stems, roots or green fruits.

The catalysed reaction is (+)-neomenthol + NADP(+) = (1R,4S)-menthone + NADPH + H(+). Functionally, involved in basal resistance against pathogens. The polypeptide is (+)-neomenthol dehydrogenase (MNR1) (Capsicum annuum (Capsicum pepper)).